A 563-amino-acid polypeptide reads, in one-letter code: Putative solute carrier family 26 member 10P (563 aa).

Helical transmembrane passes span 45–65 (ALLA…PVLI), 75–91 (LSTG…GSAV), 116–136 (VGVA…MFVL), 152–172 (ALTS…LLGL), and 352–372 (LAGL…GPFF). The 136-residue stretch at 406–541 (RVDFLLQVPG…VSVQDAAAYA (136 aa)) folds into the STAS domain.

Belongs to the SLC26A/SulP transporter (TC 2.A.53) family.

It localises to the membrane. Functionally, chloride/bicarbonate exchanger. The sequence is that of Putative solute carrier family 26 member 10P (SLC26A10P) from Homo sapiens (Human).